The sequence spans 694 residues: Elongation factor G (694 aa).

The region spanning 8–287 (EDYRNFGIMA…AVVEFLPAPT (280 aa)) is the tr-type G domain. GTP-binding positions include 17 to 24 (AHIDAGKT), 86 to 90 (DTPGH), and 140 to 143 (NKMD).

Belongs to the TRAFAC class translation factor GTPase superfamily. Classic translation factor GTPase family. EF-G/EF-2 subfamily.

It is found in the cytoplasm. Catalyzes the GTP-dependent ribosomal translocation step during translation elongation. During this step, the ribosome changes from the pre-translocational (PRE) to the post-translocational (POST) state as the newly formed A-site-bound peptidyl-tRNA and P-site-bound deacylated tRNA move to the P and E sites, respectively. Catalyzes the coordinated movement of the two tRNA molecules, the mRNA and conformational changes in the ribosome. This is Elongation factor G from Brucella suis (strain ATCC 23445 / NCTC 10510).